We begin with the raw amino-acid sequence, 233 residues long: Purine nucleoside phosphorylase DeoD-type (233 aa).

An a purine D-ribonucleoside-binding site is contributed by histidine 4. Residues glycine 20, arginine 24, arginine 43, and 87–90 (RIGT) contribute to the phosphate site. Residues 179–181 (EME) and 203–204 (SD) contribute to the a purine D-ribonucleoside site. Aspartate 204 (proton donor) is an active-site residue.

It belongs to the PNP/UDP phosphorylase family. As to quaternary structure, homohexamer; trimer of homodimers.

It carries out the reaction a purine D-ribonucleoside + phosphate = a purine nucleobase + alpha-D-ribose 1-phosphate. The enzyme catalyses a purine 2'-deoxy-D-ribonucleoside + phosphate = a purine nucleobase + 2-deoxy-alpha-D-ribose 1-phosphate. In terms of biological role, catalyzes the reversible phosphorolytic breakdown of the N-glycosidic bond in the beta-(deoxy)ribonucleoside molecules, with the formation of the corresponding free purine bases and pentose-1-phosphate. The protein is Purine nucleoside phosphorylase DeoD-type of Thermoanaerobacter pseudethanolicus (strain ATCC 33223 / 39E) (Clostridium thermohydrosulfuricum).